A 595-amino-acid chain; its full sequence is DNA ligase (595 aa).

NAD(+) contacts are provided by residues 32 to 36 (DEKYD), 81 to 82 (SL), and glutamate 113. Lysine 115 serves as the catalytic N6-AMP-lysine intermediate. Positions 136, 178, 296, and 320 each coordinate NAD(+). Residues cysteine 414, cysteine 417, cysteine 432, and cysteine 438 each contribute to the Zn(2+) site.

Belongs to the NAD-dependent DNA ligase family. LigA subfamily. It depends on Mg(2+) as a cofactor. Mn(2+) serves as cofactor.

It carries out the reaction NAD(+) + (deoxyribonucleotide)n-3'-hydroxyl + 5'-phospho-(deoxyribonucleotide)m = (deoxyribonucleotide)n+m + AMP + beta-nicotinamide D-nucleotide.. DNA ligase that catalyzes the formation of phosphodiester linkages between 5'-phosphoryl and 3'-hydroxyl groups in double-stranded DNA using NAD as a coenzyme and as the energy source for the reaction. It is essential for DNA replication and repair of damaged DNA. This chain is DNA ligase, found in Blochmanniella pennsylvanica (strain BPEN).